A 117-amino-acid chain; its full sequence is uncharacterized protein (117 aa).

The first 38 residues, 1–38 (MIIDSSRIPSFTQLHSTMTRAPLLLLCVALVLLGHVNG), serve as a signal peptide directing secretion.

Its subcellular location is the secreted. This is an uncharacterized protein from Homo sapiens (Human).